The sequence spans 204 residues: Uracil-DNA glycosylase (204 aa).

Asp-47 serves as the catalytic Proton acceptor.

It belongs to the uracil-DNA glycosylase (UDG) superfamily. UNG family.

Its subcellular location is the host nucleus. It catalyses the reaction Hydrolyzes single-stranded DNA or mismatched double-stranded DNA and polynucleotides, releasing free uracil.. Its function is as follows. Excises uracil residues from the DNA which can arise as a result of misincorporation of dUMP residues by DNA polymerase or deamination of cytosines. Therefore may reduce deleterious uracil incorporation into the viral genome, particularly in terminally differentiated cells which lack DNA repair enzymes. This chain is Uracil-DNA glycosylase (UL2), found in Bos taurus (Bovine).